The sequence spans 386 residues: Alanine racemase (386 aa).

Lys-38 functions as the Proton acceptor; specific for D-alanine in the catalytic mechanism. Lys-38 carries the post-translational modification N6-(pyridoxal phosphate)lysine. Arg-136 provides a ligand contact to substrate. Residue Tyr-267 is the Proton acceptor; specific for L-alanine of the active site. Substrate is bound at residue Met-315.

This sequence belongs to the alanine racemase family. It depends on pyridoxal 5'-phosphate as a cofactor.

The catalysed reaction is L-alanine = D-alanine. Its pathway is amino-acid biosynthesis; D-alanine biosynthesis; D-alanine from L-alanine: step 1/1. Catalyzes the interconversion of L-alanine and D-alanine. May also act on other amino acids. The protein is Alanine racemase (alr) of Clostridium perfringens (strain ATCC 13124 / DSM 756 / JCM 1290 / NCIMB 6125 / NCTC 8237 / Type A).